The following is a 157-amino-acid chain: 2-C-methyl-D-erythritol 2,4-cyclodiphosphate synthase (157 aa).

Positions 8 and 10 each coordinate a divalent metal cation. 4-CDP-2-C-methyl-D-erythritol 2-phosphate is bound by residues 8 to 10 and 34 to 35; these read DIH and HS. Histidine 42 provides a ligand contact to a divalent metal cation. 4-CDP-2-C-methyl-D-erythritol 2-phosphate-binding positions include 56–58 and 132–135; these read DIG and TTNE.

Belongs to the IspF family. As to quaternary structure, homotrimer. A divalent metal cation serves as cofactor.

It carries out the reaction 4-CDP-2-C-methyl-D-erythritol 2-phosphate = 2-C-methyl-D-erythritol 2,4-cyclic diphosphate + CMP. It participates in isoprenoid biosynthesis; isopentenyl diphosphate biosynthesis via DXP pathway; isopentenyl diphosphate from 1-deoxy-D-xylulose 5-phosphate: step 4/6. In terms of biological role, involved in the biosynthesis of isopentenyl diphosphate (IPP) and dimethylallyl diphosphate (DMAPP), two major building blocks of isoprenoid compounds. Catalyzes the conversion of 4-diphosphocytidyl-2-C-methyl-D-erythritol 2-phosphate (CDP-ME2P) to 2-C-methyl-D-erythritol 2,4-cyclodiphosphate (ME-CPP) with a corresponding release of cytidine 5-monophosphate (CMP). The chain is 2-C-methyl-D-erythritol 2,4-cyclodiphosphate synthase from Synechococcus sp. (strain JA-3-3Ab) (Cyanobacteria bacterium Yellowstone A-Prime).